A 291-amino-acid polypeptide reads, in one-letter code: Probable cell wall amidase LytH (291 aa).

A signal peptide spans 1 to 40; the sequence is MKKIDSWLTKHGLKNRLTLVVIVIFIIFLILLFMFVNLSD. Positions 41 to 105 constitute an SH3b domain; it reads EDTGQITITE…WVAGWHTNLN (65 aa). Residues 122 to 286 form the MurNAc-LAA domain; it reads IVLDPGHGGS…VEQAIVDGLK (165 aa). The segment at 123–147 is disordered; it reads VLDPGHGGSDQGASSSTPSKSLEKN. A compositionally biased stretch (polar residues) spans 133 to 142; that stretch reads QGASSSTPSK.

This sequence belongs to the N-acetylmuramoyl-L-alanine amidase 3 family.

Its subcellular location is the secreted. Functionally, probably involved in cell-wall metabolism. The sequence is that of Probable cell wall amidase LytH (lytH) from Staphylococcus epidermidis (strain ATCC 35984 / DSM 28319 / BCRC 17069 / CCUG 31568 / BM 3577 / RP62A).